Consider the following 110-residue polypeptide: Large ribosomal subunit protein uL22 (110 aa).

This sequence belongs to the universal ribosomal protein uL22 family. As to quaternary structure, part of the 50S ribosomal subunit.

Functionally, this protein binds specifically to 23S rRNA; its binding is stimulated by other ribosomal proteins, e.g. L4, L17, and L20. It is important during the early stages of 50S assembly. It makes multiple contacts with different domains of the 23S rRNA in the assembled 50S subunit and ribosome. The globular domain of the protein is located near the polypeptide exit tunnel on the outside of the subunit, while an extended beta-hairpin is found that lines the wall of the exit tunnel in the center of the 70S ribosome. The polypeptide is Large ribosomal subunit protein uL22 (Shigella flexneri serotype 5b (strain 8401)).